Consider the following 376-residue polypeptide: uncharacterized protein (376 aa).

Residues 19-39 (FVLISLILLLNLGLLLGIQIY) traverse the membrane as a helical segment.

This sequence to S.pombe SpAC5H10.12c.

It localises to the cytoplasm. The protein resides in the nucleus. The protein localises to the membrane. This is an uncharacterized protein from Schizosaccharomyces pombe (strain 972 / ATCC 24843) (Fission yeast).